The primary structure comprises 115 residues: U3-lycotoxin-Ls1j (115 aa).

Positions 1–20 (MKFVLLFGVFLVTLFSYSSA) are cleaved as a signal peptide. The propeptide occupies 21–44 (EMLDDFDQADEDELLSLIEKEEAR). Cystine bridges form between C48–C63, C55–C72, C62–C87, and C74–C85.

It belongs to the neurotoxin 19 (CSTX) family. 01 subfamily. Expressed by the venom gland.

It is found in the secreted. The chain is U3-lycotoxin-Ls1j from Lycosa singoriensis (Wolf spider).